Here is a 386-residue protein sequence, read N- to C-terminus: Delta(7)-sterol 5(6)-desaturase (386 aa).

The next 3 helical transmembrane spans lie at 119-139 (VLSL…IVAY), 172-192 (IPVM…GYSF), and 206-226 (AILW…YFLH). The Fatty acid hydroxylase domain maps to 214-337 (FILFTDCGIY…FTTLWDRLGN (124 aa)). The short motif at 226–230 (HRWLH) is the Histidine box-1 element. The short motif at 239 to 243 (HKPHH) is the Histidine box-2 element. The chain crosses the membrane as a helical span at residues 272–292 (PLLFPLHKVLYLLLFTFVNFW). The Histidine box-3 motif lies at 314-318 (HTVHH).

It belongs to the sterol desaturase family. Fe cation is required as a cofactor.

The protein resides in the endoplasmic reticulum membrane. The catalysed reaction is a Delta(7)-sterol + 2 Fe(II)-[cytochrome b5] + O2 + 2 H(+) = a Delta(5),Delta(7)-sterol + 2 Fe(III)-[cytochrome b5] + 2 H2O. It participates in steroid metabolism; ergosterol biosynthesis; ergosterol from zymosterol: step 3/5. In terms of biological role, catalyzes the introduction of a C-5 double bond in the B ring of ergosterol. May contribute to the regulation of ergosterol biosynthesis. In Candida dubliniensis (strain CD36 / ATCC MYA-646 / CBS 7987 / NCPF 3949 / NRRL Y-17841) (Yeast), this protein is Delta(7)-sterol 5(6)-desaturase (ERG3).